The sequence spans 296 residues: Protoheme IX farnesyltransferase (296 aa).

Transmembrane regions (helical) follow at residues 29–49, 54–74, 98–118, 121–141, 147–167, 175–195, 221–241, 246–266, and 275–295; these read LSGL…GHVA, ALTV…NCWM, FTAL…LALV, PLTA…YTPM, LALL…WTAA, GLAL…AVSI, WIAA…PLRV, YGAV…AGVG, and NFFL…FLGA.

The protein belongs to the UbiA prenyltransferase family. Protoheme IX farnesyltransferase subfamily.

Its subcellular location is the cell inner membrane. The enzyme catalyses heme b + (2E,6E)-farnesyl diphosphate + H2O = Fe(II)-heme o + diphosphate. The protein operates within porphyrin-containing compound metabolism; heme O biosynthesis; heme O from protoheme: step 1/1. In terms of biological role, converts heme B (protoheme IX) to heme O by substitution of the vinyl group on carbon 2 of heme B porphyrin ring with a hydroxyethyl farnesyl side group. In Anaeromyxobacter sp. (strain Fw109-5), this protein is Protoheme IX farnesyltransferase.